Here is a 553-residue protein sequence, read N- to C-terminus: Solute carrier family 22 member 12 (553 aa).

A helical transmembrane segment spans residues 16–36 (FQLLQAVALVTPILWVTTQNM). 3 N-linked (GlcNAc...) asparagine glycosylation sites follow: Asn56, Asn102, and Asn107. Helical transmembrane passes span 146-166 (PMAQSIFLAGILVGAAVCGHA), 182-202 (LVSVSGTIAALMPTFPLYCLF), 204-224 (FLVASAVAGVMMNTASLLMEW), 232-252 (LMMTLNALGFSFGQVLTGSVA), 260-280 (MLQLAVSAPFFLFFVYSWWLP), 351-371 (FISMLCWFAFGFTFYGLALDL), 378-398 (IFLLQALIGIVDLPVKMGSLL), 407-427 (LCQASSLVLPGLCILANILVP), 435-455 (SSLAVLGLGSLGAAFTCVTIF), 466-486 (MTAVGLGQVAARGGAMLGPLV), and 495-515 (WLPLLVYGVVPVLSGLAALLL). Ser534 bears the Phosphoserine mark.

This sequence belongs to the major facilitator (TC 2.A.1) superfamily. Organic cation transporter (TC 2.A.1.19) family. As to quaternary structure, interacts with PDZK1. Post-translationally, N-glycosylated. As to expression, expressed in the proximal tubular epithelial cells in kidney.

The protein localises to the apical cell membrane. The catalysed reaction is urate(out) + (S)-lactate(in) = urate(in) + (S)-lactate(out). It catalyses the reaction nicotinate(in) + urate(out) = nicotinate(out) + urate(in). The enzyme catalyses urate(out) + n chloride(in) = urate(in) + n chloride(out). It carries out the reaction orotate(out) + nicotinate(in) = orotate(in) + nicotinate(out). Electroneutral antiporter that translocates urate across the apical membrane of proximal tubular cells in exchange for monovalent organic or inorganic anions. Involved in renal reabsorption of urate and helps maintaining blood levels of uric acid. Mediates urate uptake by an exchange with organic anions such as (S)-lactate and nicotinate, and inorganic anion Cl(-). Other inorganic anions such as Br(-), I(-) and NO3(-) may also act as counteranions that exchange for urate. Also mediates orotate tubular uptake coupled with nicotinate efflux and to a lesser extent with lactate efflux, therefore displaying a potential role in orotate renal reabsorption. Orotate transport is Cl(-)-dependent. The polypeptide is Solute carrier family 22 member 12 (Slc22a12) (Rattus norvegicus (Rat)).